The primary structure comprises 247 residues: GTP cyclohydrolase 1 type 2 homolog (247 aa).

Histidine 63, histidine 64, aspartate 101, histidine 215, and glutamate 219 together coordinate a divalent metal cation.

Belongs to the GTP cyclohydrolase I type 2/NIF3 family. As to quaternary structure, homohexamer.

This is GTP cyclohydrolase 1 type 2 homolog from Buchnera aphidicola subsp. Baizongia pistaciae (strain Bp).